Reading from the N-terminus, the 982-residue chain is Mitochondrial DNA mismatch repair protein mutS homolog (982 aa).

698–705 (SVNGAGKS) contributes to the ATP binding site. One can recognise an HNH domain in the interval 905–951 (CEICGAPADAVHHIKPKSEHKKLCNRKLNRRSNLVPVCSSCHLDIHR).

The protein belongs to the DNA mismatch repair MutS family.

The protein localises to the mitochondrion. May be involved in DNA-mismatch repair. In Sarcophyton glaucum (Toadstool umbrella leather coral), this protein is Mitochondrial DNA mismatch repair protein mutS homolog.